The primary structure comprises 37 residues: Large ribosomal subunit protein bL36 (37 aa).

Belongs to the bacterial ribosomal protein bL36 family.

This chain is Large ribosomal subunit protein bL36, found in Psychromonas ingrahamii (strain DSM 17664 / CCUG 51855 / 37).